The following is a 323-amino-acid chain: UDP-glucuronate 4-epimerase (323 aa).

NAD(+) is bound at residue 11-13 (GFI). Y152 serves as the catalytic Proton acceptor. K156 is a binding site for NAD(+).

Belongs to the NAD(P)-dependent epimerase/dehydratase family. NAD(+) serves as cofactor.

It carries out the reaction UDP-alpha-D-glucuronate = UDP-alpha-D-galacturonate. Its function is as follows. Catalyzes the interconversion of UDP-D-glucuronic acid (UDP-GlcA) and UDP-D-galacturonic acid (UDP-GalA). In Thermodesulfobacterium geofontis (strain OPF15), this protein is UDP-glucuronate 4-epimerase.